Here is an 81-residue protein sequence, read N- to C-terminus: Antimicrobial peptide Con22 (81 aa).

The first 22 residues, M1 to A22, serve as a signal peptide directing secretion. A propeptide spanning residues E66–S81 is cleaved from the precursor.

This sequence belongs to the non-disulfide-bridged peptide (NDBP) superfamily. Long chain multifunctional peptide (group 2) family. Expressed by the venom gland.

Its subcellular location is the secreted. The protein resides in the target cell membrane. In terms of biological role, at high concentrations, acts as a pore former in cellular membranes and causes the leakage of the cells. At submicromolar concentrations, degranulates granulocytes and has a weak hemolytic activity against human erythrocytes. Also strongly inhibits the production of superoxide anions. Has a strong antibacterial activity against Gram-negative bacteria but is less active against Gram-positive bacteria. Also has antifungal activity. This is Antimicrobial peptide Con22 from Urodacus yaschenkoi (Inland robust scorpion).